Here is a 556-residue protein sequence, read N- to C-terminus: 3-phosphoinositide-dependent protein kinase 1 (556 aa).

Tyr-9 is subject to Phosphotyrosine; by SRC and INSR. The residue at position 25 (Ser-25) is a Phosphoserine. Residues 26 to 80 (PSMVRTQTESSTPPGIPGGSRQGPAMDGTAAEPRPGAGSLQHAQPPPQPRKKRPE) are disordered. A compositionally biased stretch (polar residues) spans 28 to 38 (MVRTQTESSTP). The Protein kinase domain maps to 82 to 342 (FKFGKILGEG…YGPLKAHPFF (261 aa)). ATP contacts are provided by residues 92–94 (SFS) and Lys-111. Residues 113 to 157 (LEKRHIIKENKVPYVTRERDVMSRLDHPFFVKLYFTFQDDEKLYF) form a PIF-pocket region. ATP is bound by residues 160–162 (SYA) and Glu-166. The active-site Proton acceptor is Asp-205. 2 residues coordinate ATP: Glu-209 and Asp-223. The residue at position 241 (Ser-241) is a Phosphoserine; by autocatalysis. Residue Lys-304 is modified to N6-acetyllysine. The residue at position 354 (Thr-354) is a Phosphothreonine; by MELK. Phosphotyrosine; by SRC and INSR is present on residues Tyr-373 and Tyr-376. At Ser-393 the chain carries Phosphoserine. Ser-394 carries the phosphoserine; by MAP3K5 modification. Phosphoserine is present on Ser-396. Ser-398 carries the post-translational modification Phosphoserine; by MAP3K5. A Phosphoserine modification is found at Ser-410. The 92-residue stretch at 459-550 (KMGPVDKRKG…EVWRQRYQSH (92 aa)) folds into the PH domain. At Ser-501 the chain carries Phosphoserine; by PKC/PRKCQ. Thr-513 carries the phosphothreonine; by autocatalysis modification. Ser-529 bears the Phosphoserine; by PKC/PRKCQ mark.

It belongs to the protein kinase superfamily. AGC Ser/Thr protein kinase family. PDPK1 subfamily. In terms of assembly, homodimer in its autoinhibited state. Active as monomer. Interacts with NPRL2, PPARG, PAK1, PTK2B, GRB14, PKN1 (via C-terminus), STRAP and IKKB. The Tyr-9 phosphorylated form interacts with SRC, RASA1 and CRK (via their SH2 domains). Interacts with SGK3 in a phosphorylation-dependent manner. The tyrosine-phosphorylated form interacts with PTPN6. The Ser-241 phosphorylated form interacts with YWHAH and YWHAQ. Binds INSR in response to insulin. Interacts (via PH domain) with SMAD3, SMAD4 and SMAD7. Interacts with PKN2; the interaction stimulates PDPK1 autophosphorylation, its PI(3,4,5)P3-dependent kinase activity toward 'Ser-473' of AKT1 but also activates its kinase activity toward PRKCD and PRKCZ. In terms of processing, phosphorylation on Ser-241 in the activation loop is required for full activity. PDPK1 itself can autophosphorylate Ser-241, leading to its own activation. Autophosphorylation is inhibited by the apoptotic C-terminus cleavage product of PKN2. Tyr-9 phosphorylation is critical for stabilization of both PDPK1 and the PDPK1/SRC complex via HSP90-mediated protection of PDPK1 degradation. Angiotensin II stimulates the tyrosine phosphorylation of PDPK1 in vascular smooth muscle in a calcium- and SRC-dependent manner. Phosphorylated on Tyr-9, Tyr-373 and Tyr-376 by INSR in response to insulin. Palmitate negatively regulates autophosphorylation at Ser-241 and palmitate-induced phosphorylation at Ser-529 and Ser-501 by PKC/PRKCQ negatively regulates its ability to phosphorylate PKB/AKT1. Phosphorylation at Thr-354 by MELK partially inhibits kinase activity, the inhibition is cooperatively enhanced by phosphorylation at Ser-394 and Ser-398 by MAP3K5. Autophosphorylated; autophosphorylation is inhibited by the apoptotic C-terminus cleavage product of PKN2. Post-translationally, monoubiquitinated in the kinase domain, deubiquitinated by USP4. Appears to be expressed ubiquitously. The Tyr-9 phosphorylated form is markedly increased in diseased tissue compared with normal tissue from lung, liver, colon and breast.

The protein resides in the cytoplasm. The protein localises to the nucleus. It localises to the cell membrane. It is found in the cell junction. Its subcellular location is the focal adhesion. The enzyme catalyses L-seryl-[protein] + ATP = O-phospho-L-seryl-[protein] + ADP + H(+). It carries out the reaction L-threonyl-[protein] + ATP = O-phospho-L-threonyl-[protein] + ADP + H(+). Its activity is regulated as follows. Homodimerization regulates its activity by maintaining the kinase in an autoinhibitory conformation. NPRL2 down-regulates its activity by interfering with tyrosine phosphorylation at the Tyr-9, Tyr-373 and Tyr-376 residues. The 14-3-3 protein YWHAQ acts as a negative regulator by association with the residues surrounding the Ser-241 residue. STRAP positively regulates its activity by enhancing its autophosphorylation and by stimulating its dissociation from YWHAQ. SMAD2, SMAD3, SMAD4 and SMAD7 also positively regulate its activity by stimulating its dissociation from YWHAQ. Activated by phosphorylation on Tyr-9, Tyr-373 and Tyr-376 by INSR in response to insulin. Its function is as follows. Serine/threonine kinase which acts as a master kinase, phosphorylating and activating a subgroup of the AGC family of protein kinases. Its targets include: protein kinase B (PKB/AKT1, PKB/AKT2, PKB/AKT3), p70 ribosomal protein S6 kinase (RPS6KB1), p90 ribosomal protein S6 kinase (RPS6KA1, RPS6KA2 and RPS6KA3), cyclic AMP-dependent protein kinase (PRKACA), protein kinase C (PRKCD and PRKCZ), serum and glucocorticoid-inducible kinase (SGK1, SGK2 and SGK3), p21-activated kinase-1 (PAK1), TSSK3, protein kinase PKN (PKN1 and PKN2). Plays a central role in the transduction of signals from insulin by providing the activating phosphorylation to PKB/AKT1, thus propagating the signal to downstream targets controlling cell proliferation and survival, as well as glucose and amino acid uptake and storage. Negatively regulates the TGF-beta-induced signaling by: modulating the association of SMAD3 and SMAD7 with TGF-beta receptor, phosphorylating SMAD2, SMAD3, SMAD4 and SMAD7, preventing the nuclear translocation of SMAD3 and SMAD4 and the translocation of SMAD7 from the nucleus to the cytoplasm in response to TGF-beta. Activates PPARG transcriptional activity and promotes adipocyte differentiation. Activates the NF-kappa-B pathway via phosphorylation of IKKB. The tyrosine phosphorylated form is crucial for the regulation of focal adhesions by angiotensin II. Controls proliferation, survival, and growth of developing pancreatic cells. Participates in the regulation of Ca(2+) entry and Ca(2+)-activated K(+) channels of mast cells. Essential for the motility of vascular endothelial cells (ECs) and is involved in the regulation of their chemotaxis. Plays a critical role in cardiac homeostasis by serving as a dual effector for cell survival and beta-adrenergic response. Plays an important role during thymocyte development by regulating the expression of key nutrient receptors on the surface of pre-T cells and mediating Notch-induced cell growth and proliferative responses. Provides negative feedback inhibition to toll-like receptor-mediated NF-kappa-B activation in macrophages. In terms of biological role, catalytically inactive. The polypeptide is 3-phosphoinositide-dependent protein kinase 1 (PDPK1) (Homo sapiens (Human)).